We begin with the raw amino-acid sequence, 384 residues long: 3,7-dimethylxanthine N-methyltransferase 1 (384 aa).

The S-adenosyl-L-homocysteine site is built by Y18, C61, N66, D100, L101, S139, F140, and C156. Y157 contacts theobromine. C158 provides a ligand contact to S-adenosyl-L-homocysteine. Theobromine-binding residues include H160 and W161. N178 is a binding site for Mg(2+). Residue S237 participates in theobromine binding. Residues D260, F262, and N263 each coordinate Mg(2+). Y368 lines the theobromine pocket.

This sequence belongs to the methyltransferase superfamily. Type-7 methyltransferase family. Mg(2+) is required as a cofactor. As to expression, highly expressed in developing endosperm and immature fruits (grains). Detected in young leaves and flower buds, but not in mature fruits.

The enzyme catalyses theobromine + S-adenosyl-L-methionine = caffeine + S-adenosyl-L-homocysteine + H(+). The catalysed reaction is 1,7-dimethylxanthine + S-adenosyl-L-methionine = caffeine + S-adenosyl-L-homocysteine + H(+). It carries out the reaction 7-methylxanthine + S-adenosyl-L-methionine = theobromine + S-adenosyl-L-homocysteine + H(+). Its pathway is alkaloid biosynthesis. Functionally, involved in the biosynthesis of caffeine. Catalyzes the conversion of 7-methylxanthine to caffeine, likely via theobromine as an intermediate. The sequence is that of 3,7-dimethylxanthine N-methyltransferase 1 from Coffea arabica (Arabian coffee).